Consider the following 470-residue polypeptide: Protein C-ets-2 (470 aa).

The 86-residue stretch at 85 to 170 (ATFSGFKKEQ…EHLEQMIKEN (86 aa)) folds into the PNT domain. Ser-225 bears the Phosphoserine mark. The interval 270–291 (ASGKPRDHDSAETGGDSFESSE) is disordered. 3 positions are modified to phosphoserine: Ser-296, Ser-299, and Ser-302. The ETS DNA-binding region spans 364 to 444 (IQLWQFLLEL…SGKRYVYRFV (81 aa)).

This sequence belongs to the ETS family. Post-translationally, phosphorylation by CDK10 at Ser-225 may create a phosphodegron that targets ETS2 for proteasomal degradation.

The protein localises to the nucleus. Functionally, transcription factor activating transcription. Binds specifically the GGA DNA motif in gene promoters and stimulates transcription of those genes. The sequence is that of Protein C-ets-2 (ETS2) from Bos taurus (Bovine).